The primary structure comprises 214 residues: uncharacterized protein (214 aa).

Positions 1–18 (MTMYIGLILVVLATFCQG) are cleaved as a signal peptide. An N-linked (GlcNAc...) asparagine; by host glycan is attached at asparagine 64.

This is an uncharacterized protein from Magallana gigas (Pacific oyster).